The following is a 410-amino-acid chain: Multifunctional CCA protein (410 aa).

Residues Gly8 and Arg11 each contribute to the ATP site. Positions 8 and 11 each coordinate CTP. Positions 21 and 23 each coordinate Mg(2+). Arg91, Arg137, and Arg140 together coordinate ATP. CTP-binding residues include Arg91, Arg137, and Arg140. The region spanning 228-329 (TGIHSLMALR…VKLLEQVDAF (102 aa)) is the HD domain.

This sequence belongs to the tRNA nucleotidyltransferase/poly(A) polymerase family. Bacterial CCA-adding enzyme type 1 subfamily. Monomer. Can also form homodimers and oligomers. The cofactor is Mg(2+). Ni(2+) serves as cofactor.

The enzyme catalyses a tRNA precursor + 2 CTP + ATP = a tRNA with a 3' CCA end + 3 diphosphate. It carries out the reaction a tRNA with a 3' CCA end + 2 CTP + ATP = a tRNA with a 3' CCACCA end + 3 diphosphate. Catalyzes the addition and repair of the essential 3'-terminal CCA sequence in tRNAs without using a nucleic acid template. Adds these three nucleotides in the order of C, C, and A to the tRNA nucleotide-73, using CTP and ATP as substrates and producing inorganic pyrophosphate. tRNA 3'-terminal CCA addition is required both for tRNA processing and repair. Also involved in tRNA surveillance by mediating tandem CCA addition to generate a CCACCA at the 3' terminus of unstable tRNAs. While stable tRNAs receive only 3'-terminal CCA, unstable tRNAs are marked with CCACCA and rapidly degraded. The protein is Multifunctional CCA protein of Legionella pneumophila (strain Paris).